Here is a 285-residue protein sequence, read N- to C-terminus: Ribosomal RNA small subunit methyltransferase A (285 aa).

6 residues coordinate S-adenosyl-L-methionine: Asn29, Leu31, Gly56, Glu77, Asp102, and Asn123.

Belongs to the class I-like SAM-binding methyltransferase superfamily. rRNA adenine N(6)-methyltransferase family. RsmA subfamily.

The protein localises to the cytoplasm. The enzyme catalyses adenosine(1518)/adenosine(1519) in 16S rRNA + 4 S-adenosyl-L-methionine = N(6)-dimethyladenosine(1518)/N(6)-dimethyladenosine(1519) in 16S rRNA + 4 S-adenosyl-L-homocysteine + 4 H(+). Its function is as follows. Specifically dimethylates two adjacent adenosines (A1518 and A1519) in the loop of a conserved hairpin near the 3'-end of 16S rRNA in the 30S particle. May play a critical role in biogenesis of 30S subunits. The chain is Ribosomal RNA small subunit methyltransferase A from Clostridium perfringens (strain ATCC 13124 / DSM 756 / JCM 1290 / NCIMB 6125 / NCTC 8237 / Type A).